Reading from the N-terminus, the 169-residue chain is Large ribosomal subunit protein uL10 (169 aa).

This sequence belongs to the universal ribosomal protein uL10 family. Part of the ribosomal stalk of the 50S ribosomal subunit. The N-terminus interacts with L11 and the large rRNA to form the base of the stalk. The C-terminus forms an elongated spine to which L12 dimers bind in a sequential fashion forming a multimeric L10(L12)X complex.

Functionally, forms part of the ribosomal stalk, playing a central role in the interaction of the ribosome with GTP-bound translation factors. This Onion yellows phytoplasma (strain OY-M) protein is Large ribosomal subunit protein uL10.